The primary structure comprises 458 residues: RuvB-like helicase 1 (458 aa).

A compositionally biased stretch (basic and acidic residues) spans 1–18 (MVQITEVKENQSSRESRT). Residues 1 to 20 (MVQITEVKENQSSRESRTAA) form a disordered region. An ATP-binding site is contributed by 73 to 80 (GPPATGKT).

The protein belongs to the RuvB family. In terms of assembly, may form heterododecamers with RVB2. Component of the SWR1 chromatin remodeling complex, the INO80 chromatin remodeling complex, and of the R2TP complex.

The protein localises to the nucleus. It carries out the reaction ATP + H2O = ADP + phosphate + H(+). In terms of biological role, DNA helicase which participates in several chromatin remodeling complexes, including the SWR1 and the INO80 complexes. The SWR1 complex mediates the ATP-dependent exchange of histone H2A for the H2A variant HZT1 leading to transcriptional regulation of selected genes by chromatin remodeling. The INO80 complex remodels chromatin by shifting nucleosomes and is involved in DNA repair. Also involved in pre-rRNA processing. In Candida albicans (strain SC5314 / ATCC MYA-2876) (Yeast), this protein is RuvB-like helicase 1 (RVB1).